A 171-amino-acid chain; its full sequence is Large ribosomal subunit protein uL10 (171 aa).

The protein belongs to the universal ribosomal protein uL10 family. Part of the ribosomal stalk of the 50S ribosomal subunit. The N-terminus interacts with L11 and the large rRNA to form the base of the stalk. The C-terminus forms an elongated spine to which L12 dimers bind in a sequential fashion forming a multimeric L10(L12)X complex.

Its function is as follows. Forms part of the ribosomal stalk, playing a central role in the interaction of the ribosome with GTP-bound translation factors. This is Large ribosomal subunit protein uL10 from Corynebacterium glutamicum (strain R).